The following is a 155-amino-acid chain: Small ribosomal subunit protein uS7c (155 aa).

It belongs to the universal ribosomal protein uS7 family. Part of the 30S ribosomal subunit.

The protein resides in the plastid. It is found in the chloroplast. Functionally, one of the primary rRNA binding proteins, it binds directly to 16S rRNA where it nucleates assembly of the head domain of the 30S subunit. The polypeptide is Small ribosomal subunit protein uS7c (rps7) (Gunnera chilensis (Chilean rhubarb)).